The following is a 186-amino-acid chain: Elongation factor P (186 aa).

It belongs to the elongation factor P family.

The protein localises to the cytoplasm. Its pathway is protein biosynthesis; polypeptide chain elongation. In terms of biological role, involved in peptide bond synthesis. Stimulates efficient translation and peptide-bond synthesis on native or reconstituted 70S ribosomes in vitro. Probably functions indirectly by altering the affinity of the ribosome for aminoacyl-tRNA, thus increasing their reactivity as acceptors for peptidyl transferase. In Laribacter hongkongensis (strain HLHK9), this protein is Elongation factor P.